A 506-amino-acid chain; its full sequence is Histone acetyltransferase esa-1 (506 aa).

The disordered stretch occupies residues 1–24 (MSPPGGDATVGSDEKRQKGKATPD). Positions 26 to 78 (IKMGCIAMVMKEGQLRRAEILSIKDTKSGRQFYCNFDNFNKRLDEWVPAARID) constitute a Tudor-knot domain. The tract at residues 82–215 (DVEWPNPDKD…LRTSGSMTQN (134 aa)) is disordered. Positions 87–98 (NPDKDKQKDAKT) are enriched in basic and acidic residues. A compositionally biased stretch (basic residues) spans 109 to 120 (QPSKKNNQKKAS). The span at 167 to 178 (GGDKGVKRKADE) shows a compositional bias: basic and acidic residues. Residues 220-494 (SRIRNISKVE…IDPERIQWKP (275 aa)) form the MYST-type HAT domain. A C2HC MYST-type zinc finger spans residues 253–278 (IYICEFCLSYYGELKSFVRHRQKCTL). An ESA1-RPD3 motif motif is present at residues 303–324 (RTWCRNLCLLSKMFLDHKTLYY). K320 is modified (N6-acetyllysine; by autocatalysis). Residues 361–365 (ACILT) and 370–376 (QRKGYGR) each bind acetyl-CoA. E396 serves as the catalytic Proton donor/acceptor. S400 contacts acetyl-CoA.

The protein belongs to the MYST (SAS/MOZ) family. In terms of assembly, component of the NuA4 histone acetyltransferase complex. Post-translationally, autoacetylation at Lys-320 is required for proper function.

It is found in the nucleus. The protein resides in the chromosome. The enzyme catalyses L-lysyl-[histone] + acetyl-CoA = N(6)-acetyl-L-lysyl-[histone] + CoA + H(+). It carries out the reaction L-lysyl-[protein] + acetyl-CoA = N(6)-acetyl-L-lysyl-[protein] + CoA + H(+). It catalyses the reaction 2-hydroxyisobutanoyl-CoA + L-lysyl-[protein] = N(6)-(2-hydroxyisobutanoyl)-L-lysyl-[protein] + CoA + H(+). The catalysed reaction is (2E)-butenoyl-CoA + L-lysyl-[protein] = N(6)-(2E)-butenoyl-L-lysyl-[protein] + CoA + H(+). In terms of biological role, catalytic component of the NuA4 histone acetyltransferase (HAT) complex which is involved in epigenetic transcriptional activation of selected genes principally by acetylation of nucleosomal histones H4, H3, H2B, H2A and H2A variant H2A.Z. Acetylates histone H4 to form H4K5ac, H4K8ac, H4K12ac and H4K16ac, histone H3 to form H3K14ac, and histone H2A to form H2AK4ac and H2AK7ac. The NuA4 complex is involved in the DNA damage response and is required for chromosome segregation. The NuA4 complex plays a direct role in repair of DNA double-strand breaks (DSBs) through homologous recombination. Recruitment to promoters depends on H3K4me. Also acetylates non-histone proteins. In addition to protein acetyltransferase, can use different acyl-CoA substrates, such as 2-hydroxyisobutanoyl-CoA (2-hydroxyisobutyryl-CoA) or (2E)-butenoyl-CoA (crotonyl-CoA), and is able to mediate protein 2-hydroxyisobutyrylation and crotonylation, respectively. This Neurospora crassa (strain ATCC 24698 / 74-OR23-1A / CBS 708.71 / DSM 1257 / FGSC 987) protein is Histone acetyltransferase esa-1 (esa-1).